Reading from the N-terminus, the 109-residue chain is NADH-quinone oxidoreductase subunit K (109 aa).

Helical transmembrane passes span 12–32, 40–60, and 72–92; these read LNHYLILSSLVFTIGMLGLFM, ILMSIELMLLAVNINFVAFSV, and IIILTIAAAETSIGLAILLIY.

It belongs to the complex I subunit 4L family. As to quaternary structure, NDH-1 is composed of 14 different subunits. Subunits NuoA, H, J, K, L, M, N constitute the membrane sector of the complex.

The protein resides in the cell inner membrane. The catalysed reaction is a quinone + NADH + 5 H(+)(in) = a quinol + NAD(+) + 4 H(+)(out). Functionally, NDH-1 shuttles electrons from NADH, via FMN and iron-sulfur (Fe-S) centers, to quinones in the respiratory chain. The immediate electron acceptor for the enzyme in this species is believed to be ubiquinone. Couples the redox reaction to proton translocation (for every two electrons transferred, four hydrogen ions are translocated across the cytoplasmic membrane), and thus conserves the redox energy in a proton gradient. The chain is NADH-quinone oxidoreductase subunit K from Rickettsia bellii (strain RML369-C).